A 51-amino-acid polypeptide reads, in one-letter code: Large ribosomal subunit protein eL39 (51 aa).

The protein belongs to the eukaryotic ribosomal protein eL39 family.

This chain is Large ribosomal subunit protein eL39 (RpL39), found in Plutella xylostella (Diamondback moth).